Consider the following 329-residue polypeptide: Flotillin-like protein FloA (329 aa).

2 consecutive transmembrane segments (helical) span residues 4-24 (IAFI…FAIV) and 26-46 (VGLW…TLIG).

The protein belongs to the flotillin-like FloA family. As to quaternary structure, homooligomerizes.

The protein localises to the cell membrane. It is found in the membrane raft. In terms of biological role, found in functional membrane microdomains (FMM) that may be equivalent to eukaryotic membrane rafts. FMMs are highly dynamic and increase in number as cells age. Flotillins are thought to be important factors in membrane fluidity. The chain is Flotillin-like protein FloA from Acetivibrio thermocellus (strain ATCC 27405 / DSM 1237 / JCM 9322 / NBRC 103400 / NCIMB 10682 / NRRL B-4536 / VPI 7372) (Clostridium thermocellum).